Consider the following 395-residue polypeptide: Acid ceramidase (395 aa).

An N-terminal signal peptide occupies residues M1 to A21. Cysteines 31 and 340 form a disulfide. The active-site Nucleophile is C143. N-linked (GlcNAc...) asparagine glycosylation is found at N173, N195, N259, N286, N342, and N348. A disulfide bond links C388 and C392.

It belongs to the acid ceramidase family. As to quaternary structure, heterodimer; disulfide-linked. The heterodimer is composed of the disulfide-linked alpha and beta chains produced by autocatalytic cleavage of the precursor. Post-translationally, N-glycosylated. In terms of processing, proteolytically cleaved into two chains alpha and beta that remain associated via a disulfide bond. Cleavage gives rise to a conformation change that activates the enzyme. The same catalytic Cys residue mediates the autoproteolytic cleavage and subsequent hydrolysis of lipid substrates. The beta chain may undergo an additional C-terminal processing.

The protein localises to the lysosome. It localises to the secreted. The catalysed reaction is an N-acylsphing-4-enine + H2O = sphing-4-enine + a fatty acid. It carries out the reaction N-dodecanoylsphing-4-enine + H2O = dodecanoate + sphing-4-enine. It catalyses the reaction N-tetradecanoylsphing-4-enine + H2O = tetradecanoate + sphing-4-enine. The enzyme catalyses N-hexadecanoylsphing-4-enine + H2O = sphing-4-enine + hexadecanoate. The catalysed reaction is N-octadecanoylsphing-4-enine + H2O = sphing-4-enine + octadecanoate. It carries out the reaction N-dodecanoyl-(4R)-hydroxysphinganine + H2O = (4R)-hydroxysphinganine + dodecanoate. It catalyses the reaction N-(dodecanoyl)-sphinganine + H2O = dodecanoate + sphinganine. The enzyme catalyses N-(acetyl)-sphing-4-enine + H2O = sphing-4-enine + acetate. The catalysed reaction is N-(hexanoyl)sphing-4-enine + H2O = hexanoate + sphing-4-enine. It carries out the reaction N-octanoylsphing-4-enine + H2O = octanoate + sphing-4-enine. It catalyses the reaction N-(9Z-octadecenoyl)-sphing-4-enine + H2O = sphing-4-enine + (9Z)-octadecenoate. The enzyme catalyses N-dodecanoylethanolamine + H2O = dodecanoate + ethanolamine. It participates in lipid metabolism; sphingolipid metabolism. In terms of biological role, lysosomal ceramidase that hydrolyzes sphingolipid ceramides into sphingosine and free fatty acids at acidic pH. Ceramides, sphingosine, and its phosphorylated form sphingosine-1-phosphate are bioactive lipids that mediate cellular signaling pathways regulating several biological processes including cell proliferation, apoptosis and differentiation. Has a higher catalytic efficiency towards C12-ceramides versus other ceramides. Also catalyzes the reverse reaction allowing the synthesis of ceramides from fatty acids and sphingosine. For the reverse synthetic reaction, the natural sphingosine D-erythro isomer is more efficiently utilized as a substrate compared to D-erythro-dihydrosphingosine and D-erythro-phytosphingosine, while the fatty acids with chain lengths of 12 or 14 carbons are the most efficiently used. Also has an N-acylethanolamine hydrolase activity. By regulating the levels of ceramides, sphingosine and sphingosine-1-phosphate in the epidermis, mediates the calcium-induced differentiation of epidermal keratinocytes. Also indirectly regulates tumor necrosis factor/TNF-induced apoptosis. By regulating the intracellular balance between ceramides and sphingosine, in adrenocortical cells, probably also acts as a regulator of steroidogenesis. The polypeptide is Acid ceramidase (Macaca fascicularis (Crab-eating macaque)).